Here is a 511-residue protein sequence, read N- to C-terminus: 2-isopropylmalate synthase (511 aa).

A Pyruvate carboxyltransferase domain is found at 4 to 266 (IRIFDTTLRD…ETGIDLSQLY (263 aa)). 4 residues coordinate Mn(2+): aspartate 13, histidine 201, histidine 203, and asparagine 237. Positions 391-511 (VLEKIRVVSG…IAANARAQKN (121 aa)) are regulatory domain.

The protein belongs to the alpha-IPM synthase/homocitrate synthase family. LeuA type 1 subfamily. In terms of assembly, homodimer. It depends on Mn(2+) as a cofactor.

Its subcellular location is the cytoplasm. The enzyme catalyses 3-methyl-2-oxobutanoate + acetyl-CoA + H2O = (2S)-2-isopropylmalate + CoA + H(+). It participates in amino-acid biosynthesis; L-leucine biosynthesis; L-leucine from 3-methyl-2-oxobutanoate: step 1/4. Its function is as follows. Catalyzes the condensation of the acetyl group of acetyl-CoA with 3-methyl-2-oxobutanoate (2-ketoisovalerate) to form 3-carboxy-3-hydroxy-4-methylpentanoate (2-isopropylmalate). The polypeptide is 2-isopropylmalate synthase (Acetivibrio thermocellus (strain ATCC 27405 / DSM 1237 / JCM 9322 / NBRC 103400 / NCIMB 10682 / NRRL B-4536 / VPI 7372) (Clostridium thermocellum)).